Reading from the N-terminus, the 406-residue chain is Olfactomedin-like protein 3 (406 aa).

The signal sequence occupies residues Met-1–Gly-21. Residues His-25–Asn-101 adopt a coiled-coil conformation. The region spanning Asp-134–Lys-401 is the Olfactomedin-like domain. An intrachain disulfide couples Cys-135 to Cys-328. Asn-177 and Asn-248 each carry an N-linked (GlcNAc...) asparagine glycan.

It belongs to the OLFML3 family. As to expression, abundant in placenta, moderate in liver and heart, whereas fairly weak in other tissues examined. On term placenta, mainly localized extracellularly surrounding the syncytiotrophoblastic cells and very rarely expressed in the maternal decidua layer.

Its subcellular location is the secreted. Secreted scaffold protein that plays an essential role in dorsoventral patterning during early development. Stabilizes axial formation by restricting chordin (CHRD) activity on the dorsal side. Acts by facilitating the association between the tolloid proteases and their substrate chordin (CHRD), leading to enhance chordin (CHRD) degradation. May have matrix-related function involved in placental and embryonic development, or play a similar role in other physiological processes. The polypeptide is Olfactomedin-like protein 3 (OLFML3) (Homo sapiens (Human)).